Reading from the N-terminus, the 261-residue chain is Non-homologous end joining protein Ku 1 (261 aa).

The region spanning 12-171 (SFSLVAIPVQ…LITLHYSDEV (160 aa)) is the Ku domain.

It belongs to the prokaryotic Ku family. As to quaternary structure, homodimer. Interacts with LigD.

In terms of biological role, with LigD forms a non-homologous end joining (NHEJ) DNA repair enzyme, which repairs dsDNA breaks with reduced fidelity. Binds linear dsDNA with 5'- and 3'- overhangs but not closed circular dsDNA nor ssDNA. Recruits and stimulates the ligase activity of LigD. This Geotalea uraniireducens (strain Rf4) (Geobacter uraniireducens) protein is Non-homologous end joining protein Ku 1.